Consider the following 371-residue polypeptide: Alanine racemase (371 aa).

Lys39 acts as the Proton acceptor; specific for D-alanine in catalysis. Lys39 is modified (N6-(pyridoxal phosphate)lysine). Arg137 is a binding site for substrate. Tyr266 functions as the Proton acceptor; specific for L-alanine in the catalytic mechanism. Met314 lines the substrate pocket.

Belongs to the alanine racemase family. Pyridoxal 5'-phosphate is required as a cofactor.

The enzyme catalyses L-alanine = D-alanine. Its pathway is amino-acid biosynthesis; D-alanine biosynthesis; D-alanine from L-alanine: step 1/1. Functionally, catalyzes the interconversion of L-alanine and D-alanine. May also act on other amino acids. The chain is Alanine racemase (alr) from Desulfovibrio desulfuricans (strain ATCC 27774 / DSM 6949 / MB).